A 94-amino-acid polypeptide reads, in one-letter code: MLTINATVRKEQGKGASRRLRVANRFPAIVYGGNEEPIAIDLDHNEVINQEHKSEFYADFVNLVIDGKATKVKVKAVQRHEYKPKITHIDFLRA.

The protein belongs to the bacterial ribosomal protein bL25 family. As to quaternary structure, part of the 50S ribosomal subunit; part of the 5S rRNA/L5/L18/L25 subcomplex. Contacts the 5S rRNA. Binds to the 5S rRNA independently of L5 and L18.

In terms of biological role, this is one of the proteins that binds to the 5S RNA in the ribosome where it forms part of the central protuberance. In Proteus mirabilis (strain HI4320), this protein is Large ribosomal subunit protein bL25.